A 196-amino-acid polypeptide reads, in one-letter code: Protein LSM12 homolog A (196 aa).

One can recognise a Sm domain in the interval 3–73 (APGPGEYFSV…VSEVDIINDR (71 aa)). In terms of domain architecture, AD spans 81-175 (ASLNISKLAN…IVEKHFRDVE (95 aa)). A disordered region spans residues 174-196 (VESQKTMQRSQAQQTQKDSSLSS). Over residues 177 to 196 (QKTMQRSQAQQTQKDSSLSS) the composition is skewed to polar residues.

Belongs to the LSM12 family.

This chain is Protein LSM12 homolog A (lsm12a), found in Danio rerio (Zebrafish).